A 204-amino-acid polypeptide reads, in one-letter code: Urease accessory protein UreG 1 (204 aa).

14–21 provides a ligand contact to GTP; sequence GPVGSGKT.

The protein belongs to the SIMIBI class G3E GTPase family. UreG subfamily. In terms of assembly, homodimer. UreD, UreF and UreG form a complex that acts as a GTP-hydrolysis-dependent molecular chaperone, activating the urease apoprotein by helping to assemble the nickel containing metallocenter of UreC. The UreE protein probably delivers the nickel.

The protein localises to the cytoplasm. In terms of biological role, facilitates the functional incorporation of the urease nickel metallocenter. This process requires GTP hydrolysis, probably effectuated by UreG. The chain is Urease accessory protein UreG 1 from Methylorubrum populi (strain ATCC BAA-705 / NCIMB 13946 / BJ001) (Methylobacterium populi).